A 1436-amino-acid polypeptide reads, in one-letter code: ABC transporter C family member 15 (1436 aa).

7 consecutive transmembrane segments (helical) span residues 8–28, 129–149, 165–185, 238–258, 261–281, 349–369, and 373–393; these read IINK…IYLY, YIAT…PLIL, IYIG…NMAS, FFQY…IQIL, LGFL…VMLI, IIYW…VLVS, and TYTL…ITIL. Residues 128-412 form the ABC transmembrane type-1 1 domain; sequence NYIATGLFVF…LPDCLHKFIS (285 aa). The ABC transporter 1 domain maps to 543-766; that stretch reads ADYQDLLSIN…IDFEMILKEK (224 aa). 575–582 lines the ATP pocket; sequence GGVRSGKT. The ABC transmembrane type-1 2 domain occupies 865-1155; it reads KKYIRMGSSI…FMRQFGELES (291 aa). A run of 6 helical transmembrane segments spans residues 873–893, 919–939, 985–1005, 1017–1039, 1101–1121, and 1127–1147; these read SISF…ILLL, LIYL…YLLI, IDIL…CLVT, IAIP…NYSV, IGIR…LFSI, and GLSA…NWFM. Residues 1193-1426 enclose the ABC transporter 2 domain; it reads IEFKNVEIRY…STSRFSKLIK (234 aa). 1227-1234 contributes to the ATP binding site; it reads GRSGSGKS.

The protein belongs to the ABC transporter superfamily. ABCC family. Conjugate transporter (TC 3.A.1.208) subfamily.

The protein resides in the membrane. The polypeptide is ABC transporter C family member 15 (abcC15) (Dictyostelium discoideum (Social amoeba)).